We begin with the raw amino-acid sequence, 292 residues long: Phosphatidylglycerol--prolipoprotein diacylglyceryl transferase (292 aa).

Helical transmembrane passes span 18–38 (LFGV…GLLI), 67–87 (LLTW…VLFY), and 105–125 (GGMS…AFCL). Residue arginine 150 coordinates a 1,2-diacyl-sn-glycero-3-phospho-(1'-sn-glycerol). A run of 3 helical transmembrane segments spans residues 193-213 (QIYE…LLVW), 222-242 (GSVS…VEFV), and 266-286 (GLTM…YLIL).

This sequence belongs to the Lgt family.

It localises to the cell inner membrane. The catalysed reaction is L-cysteinyl-[prolipoprotein] + a 1,2-diacyl-sn-glycero-3-phospho-(1'-sn-glycerol) = an S-1,2-diacyl-sn-glyceryl-L-cysteinyl-[prolipoprotein] + sn-glycerol 1-phosphate + H(+). It participates in protein modification; lipoprotein biosynthesis (diacylglyceryl transfer). Catalyzes the transfer of the diacylglyceryl group from phosphatidylglycerol to the sulfhydryl group of the N-terminal cysteine of a prolipoprotein, the first step in the formation of mature lipoproteins. The sequence is that of Phosphatidylglycerol--prolipoprotein diacylglyceryl transferase from Cereibacter sphaeroides (strain ATCC 17029 / ATH 2.4.9) (Rhodobacter sphaeroides).